The primary structure comprises 271 residues: Probable septum site-determining protein MinC (271 aa).

The tract at residues Arg-106 to Arg-125 is disordered. A compositionally biased stretch (low complexity) spans Ser-110–Ala-119.

It belongs to the MinC family. Interacts with MinD and FtsZ.

Functionally, cell division inhibitor that blocks the formation of polar Z ring septums. Rapidly oscillates between the poles of the cell to destabilize FtsZ filaments that have formed before they mature into polar Z rings. Prevents FtsZ polymerization. The protein is Probable septum site-determining protein MinC of Burkholderia thailandensis (strain ATCC 700388 / DSM 13276 / CCUG 48851 / CIP 106301 / E264).